Reading from the N-terminus, the 483-residue chain is Membrane-bound lytic murein transglycosylase F (483 aa).

The signal sequence occupies residues 1 to 18 (MKGLIARFIAGFALLLWA). The segment at 19–267 (WDMVFPWQQL…RIEEKYFNHL (249 aa)) is non-LT domain. Residues 269–483 (HFDYVDIQSY…SKESDSTLKE (215 aa)) form an LT domain region. Glutamate 312 is an active-site residue. Positions 458–483 (QQIQNNEEQPSVPQEISKESDSTLKE) are disordered. Residues 473-483 (ISKESDSTLKE) are compositionally biased toward basic and acidic residues.

It in the N-terminal section; belongs to the bacterial solute-binding protein 3 family. The protein in the C-terminal section; belongs to the transglycosylase Slt family.

It localises to the cell outer membrane. It carries out the reaction Exolytic cleavage of the (1-&gt;4)-beta-glycosidic linkage between N-acetylmuramic acid (MurNAc) and N-acetylglucosamine (GlcNAc) residues in peptidoglycan, from either the reducing or the non-reducing ends of the peptidoglycan chains, with concomitant formation of a 1,6-anhydrobond in the MurNAc residue.. Murein-degrading enzyme that degrades murein glycan strands and insoluble, high-molecular weight murein sacculi, with the concomitant formation of a 1,6-anhydromuramoyl product. Lytic transglycosylases (LTs) play an integral role in the metabolism of the peptidoglycan (PG) sacculus. Their lytic action creates space within the PG sacculus to allow for its expansion as well as for the insertion of various structures such as secretion systems and flagella. The protein is Membrane-bound lytic murein transglycosylase F of Actinobacillus pleuropneumoniae serotype 5b (strain L20).